We begin with the raw amino-acid sequence, 449 residues long: Glucose-6-phosphate isomerase (449 aa).

Glu291 (proton donor) is an active-site residue. Active-site residues include His312 and Lys426.

Belongs to the GPI family.

It localises to the cytoplasm. It catalyses the reaction alpha-D-glucose 6-phosphate = beta-D-fructose 6-phosphate. The protein operates within carbohydrate biosynthesis; gluconeogenesis. It participates in carbohydrate degradation; glycolysis; D-glyceraldehyde 3-phosphate and glycerone phosphate from D-glucose: step 2/4. Catalyzes the reversible isomerization of glucose-6-phosphate to fructose-6-phosphate. The chain is Glucose-6-phosphate isomerase from Streptococcus pyogenes serotype M5 (strain Manfredo).